Reading from the N-terminus, the 456-residue chain is Trigger factor (456 aa).

Positions 192-277 (GDTVVIDFVG…IHEVKTKEVP (86 aa)) constitute a PPIase FKBP-type domain.

The protein belongs to the FKBP-type PPIase family. Tig subfamily.

The protein localises to the cytoplasm. The enzyme catalyses [protein]-peptidylproline (omega=180) = [protein]-peptidylproline (omega=0). Functionally, involved in protein export. Acts as a chaperone by maintaining the newly synthesized protein in an open conformation. Functions as a peptidyl-prolyl cis-trans isomerase. This Streptococcus pyogenes serotype M4 (strain MGAS10750) protein is Trigger factor.